A 792-amino-acid chain; its full sequence is Phosphoenolpyruvate synthase (792 aa).

Residue His421 is the Tele-phosphohistidine intermediate of the active site. Residues Arg511, Arg578, Glu680, Gly701, Ser702, Asn703, and Asp704 each coordinate substrate. Glu680 is a Mg(2+) binding site. Position 704 (Asp704) interacts with Mg(2+). Catalysis depends on Cys751, which acts as the Proton donor.

Belongs to the PEP-utilizing enzyme family. In terms of assembly, homodimer. Requires Mg(2+) as cofactor.

The catalysed reaction is pyruvate + ATP + H2O = phosphoenolpyruvate + AMP + phosphate + 2 H(+). The protein operates within carbohydrate biosynthesis; gluconeogenesis. Its activity is regulated as follows. Activated by a Pi-dependent pyrophosphorylation and inactivated by an ADP-dependent phosphorylation on a regulatory threonine. Both reactions are mediated by the bifunctional serine/threonine kinase and phosphorylase PpsR. Its function is as follows. Catalyzes the phosphorylation of pyruvate to phosphoenolpyruvate. The sequence is that of Phosphoenolpyruvate synthase (ppsA) from Escherichia coli (strain K12).